The following is a 624-amino-acid chain: tRNA uridine 5-carboxymethylaminomethyl modification enzyme MnmG (624 aa).

FAD-binding positions include 13-18, Val125, and Ser180; that span reads GGGHAG. An NAD(+)-binding site is contributed by 273–287; the sequence is GPRYCPSIEDKIVRF. Gln370 contacts FAD.

Belongs to the MnmG family. As to quaternary structure, homodimer. Heterotetramer of two MnmE and two MnmG subunits. It depends on FAD as a cofactor.

The protein localises to the cytoplasm. Functionally, NAD-binding protein involved in the addition of a carboxymethylaminomethyl (cmnm) group at the wobble position (U34) of certain tRNAs, forming tRNA-cmnm(5)s(2)U34. This is tRNA uridine 5-carboxymethylaminomethyl modification enzyme MnmG from Legionella pneumophila subsp. pneumophila (strain Philadelphia 1 / ATCC 33152 / DSM 7513).